Reading from the N-terminus, the 61-residue chain is Beta-defensin 133 (61 aa).

An N-terminal signal peptide occupies residues 1-23 (MKIHVFLFVLFFFLVPIATRVKC). Disulfide bonds link cysteine 31/cysteine 59 and cysteine 38/cysteine 52.

The protein belongs to the beta-defensin family.

The protein localises to the secreted. Has antibacterial activity. The polypeptide is Beta-defensin 133 (DEFB133) (Homo sapiens (Human)).